The sequence spans 230 residues: UPF0173 metal-dependent hydrolase Pden_0574 (230 aa).

The protein belongs to the UPF0173 family.

In Paracoccus denitrificans (strain Pd 1222), this protein is UPF0173 metal-dependent hydrolase Pden_0574.